A 60-amino-acid polypeptide reads, in one-letter code: MAVQQVKKSRSKRDMRRSHDSLTGPTLSTDKSTGELHLRHHVSPNGFYKGKKVVDTKSED.

The segment at 1–60 is disordered; the sequence is MAVQQVKKSRSKRDMRRSHDSLTGPTLSTDKSTGELHLRHHVSPNGFYKGKKVVDTKSED. Basic residues predominate over residues 7 to 16; the sequence is KKSRSKRDMR.

The protein belongs to the bacterial ribosomal protein bL32 family.

This chain is Large ribosomal subunit protein bL32, found in Francisella philomiragia subsp. philomiragia (strain ATCC 25017 / CCUG 19701 / FSC 153 / O#319-036).